Here is a 173-residue protein sequence, read N- to C-terminus: Nucleoside-triphosphatase THEP1 (173 aa).

ATP contacts are provided by residues 9-16 (GPPGVGKT) and 97-104 (LYVIDEVG).

This sequence belongs to the THEP1 NTPase family.

It carries out the reaction a ribonucleoside 5'-triphosphate + H2O = a ribonucleoside 5'-diphosphate + phosphate + H(+). Has nucleotide phosphatase activity towards ATP, GTP, CTP, TTP and UTP. May hydrolyze nucleoside diphosphates with lower efficiency. This Caldivirga maquilingensis (strain ATCC 700844 / DSM 13496 / JCM 10307 / IC-167) protein is Nucleoside-triphosphatase THEP1.